The primary structure comprises 516 residues: Alpha-(1-&gt;6)-mannopyranosyltransferase A (516 aa).

Position 2 is an N-acetylthreonine (Thr2). The next 13 membrane-spanning stretches (helical) occupy residues 38 to 58, 78 to 98, 112 to 132, 174 to 194, 198 to 218, 232 to 252, 278 to 298, 326 to 346, 350 to 370, 385 to 405, 414 to 434, 454 to 474, and 477 to 497; these read ARLG…AGSV, GLVL…LAWL, FTMR…VPVF, ITTA…TVIV, VVAG…LLVW, PTAL…MGGV, IILI…LPFL, LLIF…GLGW, LAGS…ANVI, LLRI…PLLW, AALT…PAAL, AIAA…PDGS, and MYSW…WYVL.

The protein belongs to the MptA/B family.

The protein resides in the membrane. Functionally, involved in the latter stages of the biosynthesis of the alpha-(1-&gt;6) mannan core of lipomannan (LM). Catalyzes the addition of alpha-(1-&gt;6)-mannose residue. The protein is Alpha-(1-&gt;6)-mannopyranosyltransferase A (mptA) of Mycobacterium tuberculosis (strain ATCC 25618 / H37Rv).